Reading from the N-terminus, the 125-residue chain is Fluoride-specific ion channel FluC (125 aa).

The next 4 helical transmembrane spans lie at 9 to 29, 32 to 52, 67 to 87, and 99 to 119; these read LFCAGGGLTRYYLSGWIYGLL, AFPYGTLVVNIIGAYCIGLIM, IGLTVGFMGGLTTFSTFSYET, and AFTNVLASVAVCLLCTWLGII. Positions 75 and 78 each coordinate Na(+).

The protein belongs to the fluoride channel Fluc/FEX (TC 1.A.43) family.

It is found in the cell inner membrane. It catalyses the reaction fluoride(in) = fluoride(out). Its activity is regulated as follows. Na(+) is not transported, but it plays an essential structural role and its presence is essential for fluoride channel function. Functionally, fluoride-specific ion channel. Important for reducing fluoride concentration in the cell, thus reducing its toxicity. This chain is Fluoride-specific ion channel FluC, found in Trichlorobacter lovleyi (strain ATCC BAA-1151 / DSM 17278 / SZ) (Geobacter lovleyi).